The sequence spans 398 residues: Riboflavin transporter RfnT (398 aa).

The next 12 helical transmembrane spans lie at 13 to 35 (ILTIAQALGASSPPIVISLGGLV), 45 to 67 (LVTLPVSLFNLGLALGTLPAAFF), 74 to 91 (RNAYMLGALVGAAAGVIA), 95 to 117 (IFAASFLIFCLGTLTAGFYASYV), 137 to 156 (ISWVMVGGLVAAIVGPQLVI), 166 to 188 (MFAGSFLSQAVLGLLALPVLFML), 220 to 242 (VAAGVCSYALMTFVMTAAPIAMV), 252 to 274 (ALGIQWHVLAMFAPSFFTGKLIT), 281 to 300 (ITALGLVLIAFSAIIALGGF), 305 to 324 (FWGALIFLGIGWNFGFIGAT), 345 to 367 (FIMFGTVACASFFAGSLLHSSGW), and 372 to 389 (WLVFPIVALVLVPLILRL).

Belongs to the major facilitator superfamily.

It localises to the cell membrane. Transports riboflavin into the cell. This Brucella anthropi (strain ATCC 49188 / DSM 6882 / CCUG 24695 / JCM 21032 / LMG 3331 / NBRC 15819 / NCTC 12168 / Alc 37) (Ochrobactrum anthropi) protein is Riboflavin transporter RfnT.